A 113-amino-acid polypeptide reads, in one-letter code: Nascent polypeptide-associated complex protein (113 aa).

In terms of domain architecture, NAC-A/B spans 5 to 73 (GMNPAKMKQM…AKEVPKSLEI (69 aa)).

It belongs to the NAC-alpha family. Homodimer. Interacts with the ribosome. Binds ribosomal RNA.

Functionally, contacts the emerging nascent chain on the ribosome. In Methanosarcina acetivorans (strain ATCC 35395 / DSM 2834 / JCM 12185 / C2A), this protein is Nascent polypeptide-associated complex protein.